Consider the following 164-residue polypeptide: Transcription antitermination protein NusB (164 aa).

Belongs to the NusB family.

Functionally, involved in transcription antitermination. Required for transcription of ribosomal RNA (rRNA) genes. Binds specifically to the boxA antiterminator sequence of the ribosomal RNA (rrn) operons. The polypeptide is Transcription antitermination protein NusB (Mycolicibacterium gilvum (strain PYR-GCK) (Mycobacterium gilvum (strain PYR-GCK))).